Here is a 281-residue protein sequence, read N- to C-terminus: Pantothenate synthetase (281 aa).

Residue 30–37 (MGNLHQGH) coordinates ATP. The active-site Proton donor is the His37. A (R)-pantoate-binding site is contributed by Gln61. Gln61 serves as a coordination point for beta-alanine. 149–152 (GNKD) lines the ATP pocket. Gln155 serves as a coordination point for (R)-pantoate. Residues Ile178 and 186–189 (MSSR) contribute to the ATP site.

The protein belongs to the pantothenate synthetase family. In terms of assembly, homodimer.

It localises to the cytoplasm. It catalyses the reaction (R)-pantoate + beta-alanine + ATP = (R)-pantothenate + AMP + diphosphate + H(+). It participates in cofactor biosynthesis; (R)-pantothenate biosynthesis; (R)-pantothenate from (R)-pantoate and beta-alanine: step 1/1. Its function is as follows. Catalyzes the condensation of pantoate with beta-alanine in an ATP-dependent reaction via a pantoyl-adenylate intermediate. The protein is Pantothenate synthetase of Shewanella oneidensis (strain ATCC 700550 / JCM 31522 / CIP 106686 / LMG 19005 / NCIMB 14063 / MR-1).